The following is a 916-amino-acid chain: Protein translocase subunit SecA (916 aa).

ATP-binding positions include glutamine 87, 105–109 (GEGKT), and aspartate 512. Residues 857 to 916 (QHAEAPSMEQAVAGEDEELPEGPAPVVPLEPVRNEQKIGRNEPCPCGSGKKYKHCHGQLD) form a disordered region. The Zn(2+) site is built by cysteine 900, cysteine 902, cysteine 911, and histidine 912. Positions 906–916 (KKYKHCHGQLD) are enriched in basic residues.

Belongs to the SecA family. Monomer and homodimer. Part of the essential Sec protein translocation apparatus which comprises SecA, SecYEG and auxiliary proteins SecDF-YajC and YidC. Zn(2+) is required as a cofactor.

Its subcellular location is the cell inner membrane. The protein localises to the cytoplasm. It catalyses the reaction ATP + H2O + cellular proteinSide 1 = ADP + phosphate + cellular proteinSide 2.. Its function is as follows. Part of the Sec protein translocase complex. Interacts with the SecYEG preprotein conducting channel. Has a central role in coupling the hydrolysis of ATP to the transfer of proteins into and across the cell membrane, serving both as a receptor for the preprotein-SecB complex and as an ATP-driven molecular motor driving the stepwise translocation of polypeptide chains across the membrane. In Pseudomonas paraeruginosa (strain DSM 24068 / PA7) (Pseudomonas aeruginosa (strain PA7)), this protein is Protein translocase subunit SecA.